A 347-amino-acid chain; its full sequence is Ribosomal RNA small subunit methyltransferase C (347 aa).

This sequence belongs to the methyltransferase superfamily. RsmC family. As to quaternary structure, monomer.

It localises to the cytoplasm. The catalysed reaction is guanosine(1207) in 16S rRNA + S-adenosyl-L-methionine = N(2)-methylguanosine(1207) in 16S rRNA + S-adenosyl-L-homocysteine + H(+). Specifically methylates the guanine in position 1207 of 16S rRNA in the 30S particle. The protein is Ribosomal RNA small subunit methyltransferase C of Yersinia pseudotuberculosis serotype IB (strain PB1/+).